We begin with the raw amino-acid sequence, 289 residues long: Inorganic pyrophosphatase (289 aa).

The residue at position 2 (Ser-2) is an N-acetylserine. Lys-57 is subject to N6-acetyllysine. 3 residues coordinate Mg(2+): Asp-116, Asp-121, and Asp-153. Lys-228 is modified (N6-acetyllysine). Ser-250 carries the phosphoserine modification.

The protein belongs to the PPase family. In terms of assembly, homodimer. It depends on Mg(2+) as a cofactor.

It localises to the cytoplasm. It catalyses the reaction diphosphate + H2O = 2 phosphate + H(+). This Mus musculus (Mouse) protein is Inorganic pyrophosphatase (Ppa1).